The chain runs to 418 residues: Probable serine hydroxymethyltransferase (418 aa).

(6S)-5,6,7,8-tetrahydrofolate contacts are provided by residues Leu118 and 122–124 (GHL). Lys226 carries the N6-(pyridoxal phosphate)lysine modification. 351–353 (SPF) contributes to the (6S)-5,6,7,8-tetrahydrofolate binding site.

The protein belongs to the SHMT family. As to quaternary structure, homodimer. The cofactor is pyridoxal 5'-phosphate.

It localises to the cytoplasm. The catalysed reaction is (6R)-5,10-methylene-5,6,7,8-tetrahydrofolate + glycine + H2O = (6S)-5,6,7,8-tetrahydrofolate + L-serine. It functions in the pathway one-carbon metabolism; tetrahydrofolate interconversion. Functionally, catalyzes the reversible interconversion of serine and glycine with tetrahydrofolate (THF) serving as the one-carbon carrier. This reaction serves as the major source of one-carbon groups required for the biosynthesis of purines, thymidylate, methionine, and other important biomolecules. This chain is Probable serine hydroxymethyltransferase, found in Mesomycoplasma hyopneumoniae (strain J / ATCC 25934 / NCTC 10110) (Mycoplasma hyopneumoniae).